The primary structure comprises 315 residues: Homoserine kinase (315 aa).

Residue 97-107 (PPARGLGSSAT) participates in ATP binding.

This sequence belongs to the GHMP kinase family. Homoserine kinase subfamily.

The protein resides in the cytoplasm. The enzyme catalyses L-homoserine + ATP = O-phospho-L-homoserine + ADP + H(+). It participates in amino-acid biosynthesis; L-threonine biosynthesis; L-threonine from L-aspartate: step 4/5. In terms of biological role, catalyzes the ATP-dependent phosphorylation of L-homoserine to L-homoserine phosphate. This chain is Homoserine kinase, found in Synechococcus sp. (strain CC9311).